The following is a 361-amino-acid chain: UDP-3-O-acylglucosamine N-acyltransferase (361 aa).

His253 (proton acceptor) is an active-site residue.

Belongs to the transferase hexapeptide repeat family. LpxD subfamily. Homotrimer.

The catalysed reaction is a UDP-3-O-[(3R)-3-hydroxyacyl]-alpha-D-glucosamine + a (3R)-hydroxyacyl-[ACP] = a UDP-2-N,3-O-bis[(3R)-3-hydroxyacyl]-alpha-D-glucosamine + holo-[ACP] + H(+). It functions in the pathway bacterial outer membrane biogenesis; LPS lipid A biosynthesis. Functionally, catalyzes the N-acylation of UDP-3-O-acylglucosamine using 3-hydroxyacyl-ACP as the acyl donor. Is involved in the biosynthesis of lipid A, a phosphorylated glycolipid that anchors the lipopolysaccharide to the outer membrane of the cell. This chain is UDP-3-O-acylglucosamine N-acyltransferase, found in Burkholderia pseudomallei (strain 1710b).